The chain runs to 105 residues: Wound-induced protein 1 (105 aa).

It to potato anionic peroxidase. As to expression, ubiquitous.

The polypeptide is Wound-induced protein 1 (WUN1) (Solanum tuberosum (Potato)).